A 232-amino-acid chain; its full sequence is Ribose-5-phosphate isomerase A (232 aa).

Residues 31-34 (TGST), 87-90 (DGAD), and 100-103 (KGGG) each bind substrate. Glutamate 109 serves as the catalytic Proton acceptor. Lysine 127 is a substrate binding site.

This sequence belongs to the ribose 5-phosphate isomerase family. As to quaternary structure, homodimer.

The catalysed reaction is aldehydo-D-ribose 5-phosphate = D-ribulose 5-phosphate. It functions in the pathway carbohydrate degradation; pentose phosphate pathway; D-ribose 5-phosphate from D-ribulose 5-phosphate (non-oxidative stage): step 1/1. Catalyzes the reversible conversion of ribose-5-phosphate to ribulose 5-phosphate. The protein is Ribose-5-phosphate isomerase A of Bifidobacterium longum subsp. infantis (strain ATCC 15697 / DSM 20088 / JCM 1222 / NCTC 11817 / S12).